Consider the following 262-residue polypeptide: Protein Pcal_0062 (262 aa).

It belongs to the CinA family.

The sequence is that of Protein Pcal_0062 from Pyrobaculum calidifontis (strain DSM 21063 / JCM 11548 / VA1).